A 157-amino-acid chain; its full sequence is uncharacterized protein (157 aa).

Positions 36–63 (QIEELNELCQFFNISLTYTRESLEELEN) form a coiled coil.

This is an uncharacterized protein from Bacillus subtilis (strain 168).